Consider the following 491-residue polypeptide: Probable polygalacturonase (491 aa).

A helical membrane pass occupies residues P15–L35. 3 N-linked (GlcNAc...) asparagine glycosylation sites follow: N165, N175, and N214. PbH1 repeat units lie at residues S230–S256, C257–S278, I319–T340, and V348–G369. The active-site Proton donor is D271. N399 and N421 each carry an N-linked (GlcNAc...) asparagine glycan.

Belongs to the glycosyl hydrolase 28 family.

It is found in the membrane. The enzyme catalyses (1,4-alpha-D-galacturonosyl)n+m + H2O = (1,4-alpha-D-galacturonosyl)n + (1,4-alpha-D-galacturonosyl)m.. The protein is Probable polygalacturonase of Vitis vinifera (Grape).